A 46-amino-acid polypeptide reads, in one-letter code: Photosystem II reaction center protein K (46 aa).

The propeptide occupies 1 to 9 (MIDALVLVA). The Lumenal segment spans residues 10–19 (KLPEAYAIFD). The chain crosses the membrane as a helical span at residues 20-39 (PLVDVLPVIPVLFLALAFVW). At 40-46 (QAAVGFR) the chain is on the cytoplasmic side.

This sequence belongs to the PsbK family. In terms of assembly, PSII is composed of 1 copy each of membrane proteins PsbA, PsbB, PsbC, PsbD, PsbE, PsbF, PsbH, PsbI, PsbJ, PsbK, PsbL, PsbM, PsbT, PsbX, PsbY, PsbZ, Psb30/Ycf12, peripheral proteins PsbO, CyanoQ(PsbQ), PsbU, PsbV and a large number of cofactors. It forms dimeric complexes. Part of a photosystem II (PSII) assembly intermediate complex PSII-I; crystallized from a strain deleted of psbJ, it forms monomeric PSII before addition of the oxygen evolving complex. PSII-I includes 3 assembly factors not found in mature PSII (Psb27, Psb28 and Psb34). PSII binds multiple chlorophylls, carotenoids and specific lipids. is required as a cofactor.

It localises to the cellular thylakoid membrane. Functionally, one of the components of the core complex of photosystem II (PSII). PSII is a light-driven water:plastoquinone oxidoreductase that uses light energy to abstract electrons from H(2)O, generating O(2) and a proton gradient subsequently used for ATP formation. It consists of a core antenna complex that captures photons, and an electron transfer chain that converts photonic excitation into a charge separation. Required for association of PsbZ and Psb30/Ycf12 with PSII. The polypeptide is Photosystem II reaction center protein K (Thermosynechococcus vestitus (strain NIES-2133 / IAM M-273 / BP-1)).